Here is a 154-residue protein sequence, read N- to C-terminus: 6,7-dimethyl-8-ribityllumazine synthase (154 aa).

5-amino-6-(D-ribitylamino)uracil-binding positions include Phe-26, 60-62 (ALE), and 84-86 (CII). Residue 89–90 (ET) coordinates (2S)-2-hydroxy-3-oxobutyl phosphate. The Proton donor role is filled by His-92. Asn-117 contributes to the 5-amino-6-(D-ribitylamino)uracil binding site. Arg-131 serves as a coordination point for (2S)-2-hydroxy-3-oxobutyl phosphate.

This sequence belongs to the DMRL synthase family.

The catalysed reaction is (2S)-2-hydroxy-3-oxobutyl phosphate + 5-amino-6-(D-ribitylamino)uracil = 6,7-dimethyl-8-(1-D-ribityl)lumazine + phosphate + 2 H2O + H(+). The protein operates within cofactor biosynthesis; riboflavin biosynthesis; riboflavin from 2-hydroxy-3-oxobutyl phosphate and 5-amino-6-(D-ribitylamino)uracil: step 1/2. Functionally, catalyzes the formation of 6,7-dimethyl-8-ribityllumazine by condensation of 5-amino-6-(D-ribitylamino)uracil with 3,4-dihydroxy-2-butanone 4-phosphate. This is the penultimate step in the biosynthesis of riboflavin. This is 6,7-dimethyl-8-ribityllumazine synthase from Polaromonas sp. (strain JS666 / ATCC BAA-500).